The chain runs to 468 residues: 3-isopropylmalate dehydratase large subunit (468 aa).

Residues C347, C407, and C410 each contribute to the [4Fe-4S] cluster site.

It belongs to the aconitase/IPM isomerase family. LeuC type 1 subfamily. In terms of assembly, heterodimer of LeuC and LeuD. [4Fe-4S] cluster serves as cofactor.

It catalyses the reaction (2R,3S)-3-isopropylmalate = (2S)-2-isopropylmalate. It functions in the pathway amino-acid biosynthesis; L-leucine biosynthesis; L-leucine from 3-methyl-2-oxobutanoate: step 2/4. Catalyzes the isomerization between 2-isopropylmalate and 3-isopropylmalate, via the formation of 2-isopropylmaleate. The sequence is that of 3-isopropylmalate dehydratase large subunit from Campylobacter jejuni subsp. jejuni serotype O:6 (strain 81116 / NCTC 11828).